The primary structure comprises 536 residues: Probable E3 ubiquitin-protein ligase ARI13 (536 aa).

The interval 83-328 (KISSCGICFK…GFYKFCNVSM (246 aa)) is TRIAD supradomain. Zn(2+) is bound by residues Cys87, Cys90, Cys106, His108, Cys111, Cys114, Cys135, Cys140, Cys180, Cys185, Cys210, Cys212, Cys217, Cys220, His225, Cys230, Cys277, Cys280, Cys297, Cys299, Cys304, Cys307, His314, and Cys324. The segment at 87–140 (CGICFKTCDDGDYLISTPFCSHMFCKSCWRKYLEKNFYLVEKTQTRISCPHGAC) adopts an RING-type 1 zinc-finger fold. The segment at 158–230 (EMYVEYILRS…MLESHKPVTC (73 aa)) adopts an IBR-type zinc-finger fold. Residues 277-307 (CPHCLRPADLGTKQYLRFLTCACNGRFCWKC) form an RING-type 2; atypical zinc finger. A RanBP2-type zinc finger spans residues 495–526 (DYGGLFWLCDRCTYGNTWFHKECLMCSDDIAA).

Belongs to the RBR family. Ariadne subfamily. The cofactor is Zn(2+).

It catalyses the reaction [E2 ubiquitin-conjugating enzyme]-S-ubiquitinyl-L-cysteine + [acceptor protein]-L-lysine = [E2 ubiquitin-conjugating enzyme]-L-cysteine + [acceptor protein]-N(6)-ubiquitinyl-L-lysine.. It participates in protein modification; protein ubiquitination. In terms of biological role, might act as an E3 ubiquitin-protein ligase, or as part of E3 complex, which accepts ubiquitin from specific E2 ubiquitin-conjugating enzymes and then transfers it to substrates. The sequence is that of Probable E3 ubiquitin-protein ligase ARI13 (ARI13) from Arabidopsis thaliana (Mouse-ear cress).